A 394-amino-acid chain; its full sequence is S-adenosylmethionine synthase 1 (394 aa).

Glutamate 11 lines the Mg(2+) pocket. Histidine 17 provides a ligand contact to ATP. K(+) is bound at residue glutamate 45. Residues glutamate 58 and glutamine 101 each contribute to the L-methionine site. ATP is bound by residues 169–171, 237–240, aspartate 248, 254–255, alanine 271, lysine 275, and lysine 279; these read DGK, SGRF, and RK. Aspartate 248 is a binding site for L-methionine. Lysine 279 provides a ligand contact to L-methionine.

It belongs to the AdoMet synthase family. As to quaternary structure, homotetramer. The cofactor is Mn(2+). Mg(2+) serves as cofactor. Requires Co(2+) as cofactor. K(+) is required as a cofactor.

Its subcellular location is the cytoplasm. The catalysed reaction is L-methionine + ATP + H2O = S-adenosyl-L-methionine + phosphate + diphosphate. The protein operates within amino-acid biosynthesis; S-adenosyl-L-methionine biosynthesis; S-adenosyl-L-methionine from L-methionine: step 1/1. In terms of biological role, catalyzes the formation of S-adenosylmethionine from methionine and ATP. The reaction comprises two steps that are both catalyzed by the same enzyme: formation of S-adenosylmethionine (AdoMet) and triphosphate, and subsequent hydrolysis of the triphosphate. This is S-adenosylmethionine synthase 1 (SAM1) from Hordeum vulgare (Barley).